Here is a 101-residue protein sequence, read N- to C-terminus: Small ribosomal subunit protein uS14A (101 aa).

2 disordered regions span residues 1–20 and 28–72; these read MAKKSKIAKNDRRQETVARY and TEII…RPRG. Composition is skewed to basic and acidic residues over residues 38–53 and 61–70; these read EAERRAAQQELRRQPR and RNRDSVDGRP.

Belongs to the universal ribosomal protein uS14 family. In terms of assembly, part of the 30S ribosomal subunit. Contacts proteins S3 and S10.

Its function is as follows. Binds 16S rRNA, required for the assembly of 30S particles and may also be responsible for determining the conformation of the 16S rRNA at the A site. This chain is Small ribosomal subunit protein uS14A, found in Streptomyces avermitilis (strain ATCC 31267 / DSM 46492 / JCM 5070 / NBRC 14893 / NCIMB 12804 / NRRL 8165 / MA-4680).